Reading from the N-terminus, the 199-residue chain is Probable chemoreceptor glutamine deamidase CheD (199 aa).

It belongs to the CheD family.

It carries out the reaction L-glutaminyl-[protein] + H2O = L-glutamyl-[protein] + NH4(+). Functionally, probably deamidates glutamine residues to glutamate on methyl-accepting chemotaxis receptors (MCPs), playing an important role in chemotaxis. The polypeptide is Probable chemoreceptor glutamine deamidase CheD (Cereibacter sphaeroides (Rhodobacter sphaeroides)).